A 270-amino-acid polypeptide reads, in one-letter code: Endonuclease 4 (270 aa).

H69, H108, E139, D169, H172, H204, D217, H219, and E248 together coordinate Zn(2+).

It belongs to the AP endonuclease 2 family. Zn(2+) serves as cofactor.

It catalyses the reaction Endonucleolytic cleavage to 5'-phosphooligonucleotide end-products.. In terms of biological role, endonuclease IV plays a role in DNA repair. It cleaves phosphodiester bonds at apurinic or apyrimidinic (AP) sites, generating a 3'-hydroxyl group and a 5'-terminal sugar phosphate. In addition, possesses a 3'-5' exonuclease activity. The protein is Endonuclease 4 of Thermus thermophilus (strain ATCC BAA-163 / DSM 7039 / HB27).